The sequence spans 226 residues: MSTYPLRDAVAAIATPLADALGIALWGIEIIDGGRMVLRVYVDAKPGMPVPADTAEATESATPEGVALEGSTPEGVTIDQCARLSRQLGLALDVEDVVRDAYVLEVSSPGLERPFFEIAQVVPYVGRTIELTLAVPHPEWPGRRKFRADIVRVEGDTLTFLPDTAPRPDEDPAPISVAWDDVKKAHLIHVFPDTTRPQPGGKTGQRKKAQPKKPARGGAPHDDTTD.

The segment at 190–226 is disordered; that stretch reads VFPDTTRPQPGGKTGQRKKAQPKKPARGGAPHDDTTD. Basic residues predominate over residues 204-215; that stretch reads GQRKKAQPKKPA.

It belongs to the RimP family.

It localises to the cytoplasm. Functionally, required for maturation of 30S ribosomal subunits. In Nitratidesulfovibrio vulgaris (strain DSM 19637 / Miyazaki F) (Desulfovibrio vulgaris), this protein is Ribosome maturation factor RimP.